Reading from the N-terminus, the 356-residue chain is Tyrosine recombinase XerS (356 aa).

The 106-residue stretch at 16–121 folds into the Core-binding (CB) domain; that stretch reads LMPWYVLEYY…ALSSLYKYLT (106 aa). Residues 169–354 enclose the Tyr recombinase domain; that stretch reads GFLTYIDQEH…VSDEQKNALD (186 aa). Active-site residues include arginine 210, lysine 234, histidine 306, arginine 309, and histidine 332. Tyrosine 341 serves as the catalytic O-(3'-phospho-DNA)-tyrosine intermediate.

This sequence belongs to the 'phage' integrase family. XerS subfamily.

The protein resides in the cytoplasm. With respect to regulation, ftsK is required for recombination. Its function is as follows. Site-specific tyrosine recombinase, which acts by catalyzing the cutting and rejoining of the recombining DNA molecules. Essential to convert dimers of the bacterial chromosome into monomers to permit their segregation at cell division. The polypeptide is Tyrosine recombinase XerS (Streptococcus pneumoniae serotype 4 (strain ATCC BAA-334 / TIGR4)).